A 620-amino-acid polypeptide reads, in one-letter code: Transcription factor kayak (620 aa).

Disordered stretches follow at residues 1-36 (MKVK…SNGV) and 184-288 (SDTD…EKRR). Residues 184-194 (SDTDDSNASWN) are compositionally biased toward polar residues. Composition is skewed to low complexity over residues 201–233 (GDTT…GANN) and 249–266 (ANNN…PAAR). The region spanning 284-347 (EEKRRIRRER…NQLKYVIEAH (64 aa)) is the bZIP domain. Residues 286 to 305 (KRRIRRERNKAAAARCRKRR) are basic motif. The interval 312 to 340 (LTEEVDALVKKGDTLKAEITTLTELRNQL) is leucine-zipper. Residues 375-414 (STGGSSCGSVHSNHSHNNNNNNNNSNDSSSGTITGFDATL) are disordered. Positions 377–405 (GGSSCGSVHSNHSHNNNNNNNNSNDSSSG) are enriched in low complexity. Ser422 is subject to Phosphoserine. Disordered regions lie at residues 447–466 (GLDS…AKRA) and 590–620 (SGPL…LCPL).

The protein belongs to the bZIP family. Fos subfamily. Homodimer. Heterodimer with Jra. The kay-Jra heterodimer binds more stably to the AP-1 site than either of the two proteins alone.

It is found in the nucleus. Functionally, developmentally regulated transcription factor AP-1 binds and recognizes the enhancer DNA sequence: 5'-TGA[CG]TCA-3'. May play a role in the function or determination of a particular subset of cells in the developing embryo. It is able to carry out its function either independently of or in conjunction with Jra. The sequence is that of Transcription factor kayak from Drosophila willistoni (Fruit fly).